The following is a 338-amino-acid chain: MATFDDGDFPAQTHSPSEHEDFGGYDNFSEAQQPPTQHQSGGFSSFNGDPASPNGYGFGASSPNHDFSSPFESSVNDANGNGGGSGGDAIFASDGPILPDPNEMREEGFQRREWRRLNTIHLEEKEKKEKEMRNQIITEAEDFKKAFYEKRDKTIETNKTDNREKEKLYWANQEKFHKEVDKHYWKAIAELIPREVPNIEKKRGKKDPDKKPSVNVIQGPKPGKPTDLGRMRQIFLKLKTNPPPHMMPPPPPAKDAKDGKDAKDGKDAKTGKDGKDAKGGKDAKDLKDGKPADPKVTEEKRPSPAKDASVETAKPDAAASGEGEKPVAVTEAEGTKAE.

Residues 1–111 form a disordered region; it reads MATFDDGDFP…NEMREEGFQR (111 aa). Composition is skewed to polar residues over residues 29–47 and 61–73; these read SEAQ…SSFN and SSPN…PFES. Over residues 102-111 the composition is skewed to basic and acidic residues; sequence NEMREEGFQR. Positions 102–163 are involved in binding clathrin heavy chain; sequence NEMREEGFQR…TIETNKTDNR (62 aa). The stretch at 122–142 forms a coiled coil; sequence LEEKEKKEKEMRNQIITEAED. The disordered stretch occupies residues 192–338; it reads IPREVPNIEK…VTEAEGTKAE (147 aa). Residues 197-212 are compositionally biased toward basic and acidic residues; that stretch reads PNIEKKRGKKDPDKKP. Over residues 241 to 253 the composition is skewed to pro residues; the sequence is NPPPHMMPPPPPA. A compositionally biased stretch (basic and acidic residues) spans 254-304; that stretch reads KDAKDGKDAKDGKDAKTGKDGKDAKGGKDAKDLKDGKPADPKVTEEKRPSP.

Belongs to the clathrin light chain family. As to quaternary structure, clathrin coats are formed from molecules containing 3 heavy chains and 3 light chains.

Its subcellular location is the cytoplasmic vesicle membrane. It is found in the membrane. It localises to the coated pit. In terms of biological role, clathrin is the major protein of the polyhedral coat of coated pits and vesicles. This Arabidopsis thaliana (Mouse-ear cress) protein is Clathrin light chain 1.